The following is a 251-amino-acid chain: Aspartate/glutamate leucyltransferase (251 aa).

This sequence belongs to the R-transferase family. Bpt subfamily.

The protein localises to the cytoplasm. The catalysed reaction is N-terminal L-glutamyl-[protein] + L-leucyl-tRNA(Leu) = N-terminal L-leucyl-L-glutamyl-[protein] + tRNA(Leu) + H(+). It carries out the reaction N-terminal L-aspartyl-[protein] + L-leucyl-tRNA(Leu) = N-terminal L-leucyl-L-aspartyl-[protein] + tRNA(Leu) + H(+). Its function is as follows. Functions in the N-end rule pathway of protein degradation where it conjugates Leu from its aminoacyl-tRNA to the N-termini of proteins containing an N-terminal aspartate or glutamate. The chain is Aspartate/glutamate leucyltransferase from Nitrosospira multiformis (strain ATCC 25196 / NCIMB 11849 / C 71).